We begin with the raw amino-acid sequence, 443 residues long: ATP-dependent protease ATPase subunit HslU (443 aa).

ATP contacts are provided by residues isoleucine 18 and 60–65 (GVGKTE). A disordered region spans residues 142–162 (LGFEASPSEESNATRQKFRKK). ATP-binding residues include aspartate 256, glutamate 321, and arginine 393.

This sequence belongs to the ClpX chaperone family. HslU subfamily. A double ring-shaped homohexamer of HslV is capped on each side by a ring-shaped HslU homohexamer. The assembly of the HslU/HslV complex is dependent on binding of ATP.

It is found in the cytoplasm. Functionally, ATPase subunit of a proteasome-like degradation complex; this subunit has chaperone activity. The binding of ATP and its subsequent hydrolysis by HslU are essential for unfolding of protein substrates subsequently hydrolyzed by HslV. HslU recognizes the N-terminal part of its protein substrates and unfolds these before they are guided to HslV for hydrolysis. The polypeptide is ATP-dependent protease ATPase subunit HslU (Nitrosomonas europaea (strain ATCC 19718 / CIP 103999 / KCTC 2705 / NBRC 14298)).